A 621-amino-acid polypeptide reads, in one-letter code: UvrABC system protein C (621 aa).

Residues 20 to 98 (TAPGVYRMYA…IKSLTPRYNV (79 aa)) form the GIY-YIG domain. One can recognise a UVR domain in the interval 207-242 (DLLAEELIQAMQVASEHLEFEQAARLRDLLTSLRSM).

This sequence belongs to the UvrC family. Interacts with UvrB in an incision complex.

The protein resides in the cytoplasm. Its function is as follows. The UvrABC repair system catalyzes the recognition and processing of DNA lesions. UvrC both incises the 5' and 3' sides of the lesion. The N-terminal half is responsible for the 3' incision and the C-terminal half is responsible for the 5' incision. This is UvrABC system protein C from Xylella fastidiosa (strain Temecula1 / ATCC 700964).